A 1433-amino-acid chain; its full sequence is DNA polymerase III PolC-type (1433 aa).

The Exonuclease domain maps to 419–575 (FVVFDVETTG…YDAEATGHLL (157 aa)).

Belongs to the DNA polymerase type-C family. PolC subfamily.

Its subcellular location is the cytoplasm. It catalyses the reaction DNA(n) + a 2'-deoxyribonucleoside 5'-triphosphate = DNA(n+1) + diphosphate. Required for replicative DNA synthesis. This DNA polymerase also exhibits 3' to 5' exonuclease activity. The protein is DNA polymerase III PolC-type of Halalkalibacterium halodurans (strain ATCC BAA-125 / DSM 18197 / FERM 7344 / JCM 9153 / C-125) (Bacillus halodurans).